We begin with the raw amino-acid sequence, 307 residues long: UDP-3-O-acyl-N-acetylglucosamine deacetylase (307 aa).

Zn(2+) is bound by residues His-78, His-241, and Asp-245. His-268 functions as the Proton donor in the catalytic mechanism.

This sequence belongs to the LpxC family. The cofactor is Zn(2+).

The enzyme catalyses a UDP-3-O-[(3R)-3-hydroxyacyl]-N-acetyl-alpha-D-glucosamine + H2O = a UDP-3-O-[(3R)-3-hydroxyacyl]-alpha-D-glucosamine + acetate. It participates in glycolipid biosynthesis; lipid IV(A) biosynthesis; lipid IV(A) from (3R)-3-hydroxytetradecanoyl-[acyl-carrier-protein] and UDP-N-acetyl-alpha-D-glucosamine: step 2/6. In terms of biological role, catalyzes the hydrolysis of UDP-3-O-myristoyl-N-acetylglucosamine to form UDP-3-O-myristoylglucosamine and acetate, the committed step in lipid A biosynthesis. The sequence is that of UDP-3-O-acyl-N-acetylglucosamine deacetylase from Bordetella bronchiseptica (strain ATCC BAA-588 / NCTC 13252 / RB50) (Alcaligenes bronchisepticus).